We begin with the raw amino-acid sequence, 466 residues long: 23S rRNA (uracil(1939)-C(5))-methyltransferase RlmD (466 aa).

The TRAM domain occupies 1-54 (MVDVLNIESLDLEARGIAHRDGKVLFVEGALPGERVTVQTVRRKPSYEIAKVEE). Residues Cys-67, Cys-73, Cys-76, and Cys-155 each contribute to the [4Fe-4S] cluster site. S-adenosyl-L-methionine-binding residues include Gln-264, Phe-293, Asn-298, Glu-314, Asn-342, and Asp-363. Catalysis depends on Cys-393, which acts as the Nucleophile.

This sequence belongs to the class I-like SAM-binding methyltransferase superfamily. RNA M5U methyltransferase family. RlmD subfamily.

The enzyme catalyses uridine(1939) in 23S rRNA + S-adenosyl-L-methionine = 5-methyluridine(1939) in 23S rRNA + S-adenosyl-L-homocysteine + H(+). Catalyzes the formation of 5-methyl-uridine at position 1939 (m5U1939) in 23S rRNA. The polypeptide is 23S rRNA (uracil(1939)-C(5))-methyltransferase RlmD (Bordetella pertussis (strain Tohama I / ATCC BAA-589 / NCTC 13251)).